The sequence spans 186 residues: Elongation factor P (186 aa).

This sequence belongs to the elongation factor P family.

The protein resides in the cytoplasm. Its pathway is protein biosynthesis; polypeptide chain elongation. Functionally, involved in peptide bond synthesis. Stimulates efficient translation and peptide-bond synthesis on native or reconstituted 70S ribosomes in vitro. Probably functions indirectly by altering the affinity of the ribosome for aminoacyl-tRNA, thus increasing their reactivity as acceptors for peptidyl transferase. This Ruminiclostridium cellulolyticum (strain ATCC 35319 / DSM 5812 / JCM 6584 / H10) (Clostridium cellulolyticum) protein is Elongation factor P.